The primary structure comprises 200 residues: 3-isopropylmalate dehydratase small subunit (200 aa).

This sequence belongs to the LeuD family. LeuD type 1 subfamily. As to quaternary structure, heterodimer of LeuC and LeuD.

The enzyme catalyses (2R,3S)-3-isopropylmalate = (2S)-2-isopropylmalate. The protein operates within amino-acid biosynthesis; L-leucine biosynthesis; L-leucine from 3-methyl-2-oxobutanoate: step 2/4. In terms of biological role, catalyzes the isomerization between 2-isopropylmalate and 3-isopropylmalate, via the formation of 2-isopropylmaleate. This is 3-isopropylmalate dehydratase small subunit (leuD) from Synechocystis sp. (strain ATCC 27184 / PCC 6803 / Kazusa).